Consider the following 154-residue polypeptide: Transcriptional repressor NrdR (154 aa).

A zinc finger spans residues 3–34 (CPFCSAHDTKVIDSRLVAEGDQVRRRRECQAC). The 91-residue stretch at 49 to 139 (PRVIKQDGSR…VYRRFQDLNE (91 aa)) folds into the ATP-cone domain.

Belongs to the NrdR family. Zn(2+) is required as a cofactor.

Functionally, negatively regulates transcription of bacterial ribonucleotide reductase nrd genes and operons by binding to NrdR-boxes. This chain is Transcriptional repressor NrdR, found in Azotobacter vinelandii (strain DJ / ATCC BAA-1303).